A 639-amino-acid polypeptide reads, in one-letter code: Protein sly1 homolog (639 aa).

4 tandem repeats follow at residues 85 to 121 (DENL…NLAA), 203 to 245 (RNSA…FSFQ), 423 to 460 (LDLL…ERLK), and 464 to 500 (QAAG…GGGT). The interval 85–500 (DENLDRIQQD…QATQYEGGGT (416 aa)) is 4 X approximate repeats.

The protein belongs to the STXBP/unc-18/SEC1 family. In terms of tissue distribution, in embryos, from stage 14, expression is seen in posterior midgut, esophagus and salivary glands. No expression is seen in larval imaginal disks.

The protein resides in the cytoplasm. It is found in the membrane. In terms of biological role, non-vital for development. This chain is Protein sly1 homolog (Slh), found in Drosophila melanogaster (Fruit fly).